A 219-amino-acid polypeptide reads, in one-letter code: Uracil-DNA glycosylase (219 aa).

Aspartate 61 functions as the Proton acceptor in the catalytic mechanism.

This sequence belongs to the uracil-DNA glycosylase (UDG) superfamily. UNG family.

It is found in the cytoplasm. The catalysed reaction is Hydrolyzes single-stranded DNA or mismatched double-stranded DNA and polynucleotides, releasing free uracil.. Its function is as follows. Excises uracil residues from the DNA which can arise as a result of misincorporation of dUMP residues by DNA polymerase or due to deamination of cytosine. In Exiguobacterium sibiricum (strain DSM 17290 / CCUG 55495 / CIP 109462 / JCM 13490 / 255-15), this protein is Uracil-DNA glycosylase.